The primary structure comprises 683 residues: Dynein, 78 kDa intermediate chain, flagellar outer arm (683 aa).

Positions 1–42 (MPALSPAKKGTDKGKTGKKTGKQEQNAQDYIPPPPPMPGDEA) are disordered. 4 WD repeats span residues 358–398 (HTES…DEPI), 407–450 (KLND…LIPE), 562–602 (DLND…LLPL), and 608–647 (VKKA…RITS).

This sequence belongs to the dynein intermediate chain family. In terms of assembly, consists of at least 3 heavy chains (alpha, beta and gamma), 2 intermediate chains and 8 light chains.

The protein localises to the cytoplasm. Its subcellular location is the cytoskeleton. It localises to the flagellum axoneme. Is essential for arm assembly or attachment to the outer doublet microtubule. This Chlamydomonas reinhardtii (Chlamydomonas smithii) protein is Dynein, 78 kDa intermediate chain, flagellar outer arm (ODA9).